We begin with the raw amino-acid sequence, 245 residues long: Type III pantothenate kinase (245 aa).

6 to 13 contacts ATP; it reads DVGNTAMK. Substrate is bound by residues Tyr-93 and 100–103; that span reads GVDR. Asp-102 functions as the Proton acceptor in the catalytic mechanism. Asp-121 serves as a coordination point for K(+). Ser-124 serves as a coordination point for ATP. Substrate is bound at residue Thr-175.

This sequence belongs to the type III pantothenate kinase family. Homodimer. Requires NH4(+) as cofactor. It depends on K(+) as a cofactor.

It localises to the cytoplasm. The catalysed reaction is (R)-pantothenate + ATP = (R)-4'-phosphopantothenate + ADP + H(+). It functions in the pathway cofactor biosynthesis; coenzyme A biosynthesis; CoA from (R)-pantothenate: step 1/5. Catalyzes the phosphorylation of pantothenate (Pan), the first step in CoA biosynthesis. This chain is Type III pantothenate kinase, found in Alcanivorax borkumensis (strain ATCC 700651 / DSM 11573 / NCIMB 13689 / SK2).